Here is a 412-residue protein sequence, read N- to C-terminus: Double C2-like domain-containing protein beta (412 aa).

The negatively regulates targeting to plasma membrane stretch occupies residues 1-36; it reads MTLRRRGEKATISIQEHMAIDVCPGPIRPIKQISDY. Residues 1–90 form a mediates interaction with DYNLT1 region; the sequence is MTLRRRGEKA…EDVDQLFGAY (90 aa). A disordered region spans residues 38–123; it reads PRFPRGLPPD…PDADGYESDD (86 aa). Residues 49-70 show a composition bias toward low complexity; the sequence is GPRAAAPPDAPARPAVAGAGRR. The segment covering 95-108 has biased composition (pro residues); the sequence is GPSPGPSPARPPAK. The span at 112–123 shows a compositional bias: acidic residues; sequence DEPDADGYESDD. 2 C2 domains span residues 126–250 and 266–399; these read ALGT…SICL and ERGR…ERWH. The Ca(2+) site is built by D157, D163, D218, D220, D297, D303, D357, D359, and D365. The interval 257–375 is mediates interaction with STXBP3; sequence DKTEDKSLEE…FIGGVVLGIH (119 aa). The residue at position 411 (S411) is a Phosphoserine.

Interacts with the SNARE (soluble N-ethylmaleimide-sensitive factor attached protein receptor) complex composed of SNAP25, STX1A and VAMP2; the interaction is calcium-dependent and competitive with SYT1. Interacts with STX4; the interaction is calcium-dependent, increased by insulin and glucose, and mediates vesicle fusion with plasma membrane in pancreatic cells and adipocytes. Interacts with STXBP3; the interaction is direct, occurs at the cell membrane and regulates glucose-stimulated insulin secretion. May interact with UNC13A; the interaction mediates targeting to the plasma membrane. Interacts with cytoplasmic dynein light chain DYNLT1. Requires Ca(2+) as cofactor. As to expression, widely expressed with highest levels in brain and kidney. Expressed in pancreatic islet cells (at protein level).

The protein localises to the cytoplasm. It is found in the cytoplasmic granule. Its subcellular location is the cell membrane. Calcium sensor which positively regulates SNARE-dependent fusion of vesicles with membranes. Binds phospholipids in a calcium-dependent manner and may act at the priming stage of fusion by modifying membrane curvature to stimulate fusion. Involved in calcium-triggered exocytosis in chromaffin cells and calcium-dependent spontaneous release of neurotransmitter in absence of action potentials in neuronal cells. Involved both in glucose-stimulated insulin secretion in pancreatic cells and insulin-dependent GLUT4 transport to the plasma membrane in adipocytes. The sequence is that of Double C2-like domain-containing protein beta from Homo sapiens (Human).